We begin with the raw amino-acid sequence, 368 residues long: Nucleotide pyrophosphatase/phosphodiesterase (368 aa).

Belongs to the metallophosphoesterase superfamily. As to quaternary structure, monomer and homomer. In terms of processing, glycosylated.

It is found in the plastid. Its subcellular location is the chloroplast. Its function is as follows. Hydrolyzes pyrophosphate, phosphodiester and phosphosulfate linkages of nucleotide-sugars, sulfonucleotides and nucleoside di and triphosphates. Highest activity observed with the substrates ADP-glucose and adenosine 5'-phosphosulfate. The polypeptide is Nucleotide pyrophosphatase/phosphodiesterase (Hordeum vulgare (Barley)).